A 499-amino-acid polypeptide reads, in one-letter code: Glutamyl-tRNA(Gln) amidotransferase subunit B, chloroplastic/mitochondrial (499 aa).

It belongs to the GatB/GatE family. GatB subfamily. In terms of assembly, subunit of the heterotrimeric GatCAB amidotransferase (AdT) complex, composed of A, B and C subunits.

The protein localises to the mitochondrion. The protein resides in the plastid. Its subcellular location is the chloroplast. It carries out the reaction L-glutamyl-tRNA(Gln) + L-glutamine + ATP + H2O = L-glutaminyl-tRNA(Gln) + L-glutamate + ADP + phosphate + H(+). Allows the formation of correctly charged Gln-tRNA(Gln) through the transamidation of misacylated Glu-tRNA(Gln) in chloroplasts and mitochondria. The reaction takes place in the presence of glutamine and ATP through an activated gamma-phospho-Glu-tRNA(Gln). The chain is Glutamyl-tRNA(Gln) amidotransferase subunit B, chloroplastic/mitochondrial from Ostreococcus lucimarinus (strain CCE9901).